The following is a 115-amino-acid chain: Immunoglobulin kappa variable 5-48 (115 aa).

The signal sequence occupies residues 1–20 (MVSTPQFLVFLLFWIPASRG). The segment at 21–43 (DILLTQSPAILSVSPGERVSFSC) is framework-1. The cysteines at positions 43 and 108 are disulfide-linked. A complementarity-determining-1 region spans residues 44–54 (RASQSIGTSIH). The tract at residues 55 to 69 (WYQQRTNGSPRLLIK) is framework-2. A complementarity-determining-2 region spans residues 70–76 (YASESIS). The framework-3 stretch occupies residues 77-108 (GIPSRFSGSGSGTDFTLSINSVESEDIADYYC). Residues 109–115 (QQSNSWP) are complementarity-determining-3.

The chain is Immunoglobulin kappa variable 5-48 from Mus musculus (Mouse).